The chain runs to 819 residues: FYN-binding protein 1 (819 aa).

A compositionally biased stretch (polar residues) spans 1-45 (MAKFNTGSNPTEEAATSSRPFKVAGQSSPSGIQSRKNLFDNQGNA). Residues 1–490 (MAKFNTGSNP…REKKEQELKK (490 aa)) form a disordered region. Lysine 3 bears the N6-acetyllysine mark. Serine 28 and serine 46 each carry phosphoserine. A compositionally biased stretch (basic and acidic residues) spans 69–79 (TYEEKPEKEPK). Positions 150–160 (GPKPGPAPPVP) are enriched in pro residues. Residue serine 222 is modified to Phosphoserine. Basic and acidic residues-rich tracts occupy residues 237 to 248 (PPKEDPEDKDHG) and 273 to 285 (NFEE…KTDL). Residue serine 318 is modified to Phosphoserine. 2 stretches are compositionally biased toward pro residues: residues 342 to 351 (GPPPPKPNRP) and 380 to 412 (LPPP…PRNI). Over residues 439–453 (LEEEQESEGETYEDI) the composition is skewed to acidic residues. Serine 445 carries the post-translational modification Phosphoserine. A coiled-coil region spans residues 448 to 495 (ETYEDIDSSKERDKKREKEEKKRLELERKEQKEREKKEQELKKKFKLT). Residues 454–489 (DSSKERDKKREKEEKKRLELERKEQKEREKKEQELK) are compositionally biased toward basic and acidic residues. The short motif at 479-493 (KEREKKEQELKKKFK) is the Nuclear localization signal element. The SH3 1 domain occupies 499–560 (QVIHHAKACC…KTTAVEIDYD (62 aa)). Position 559 is a phosphotyrosine (tyrosine 559). A phosphoserine mark is found at serine 561 and serine 568. Residues 584–587 (YDDV) carry the SH2-binding; to LCP2 motif. Disordered stretches follow at residues 589–635 (EQDA…DEKT) and 649–728 (KDDR…EKEE). Residues 610 to 626 (TDDEIYDGIEEEDDDDG) show a composition bias toward acidic residues. Positions 615–618 (YDGI) match the SH2-binding; to FYN motif. The segment covering 649 to 664 (KDDRKKSIREKPKVSE) has biased composition (basic and acidic residues). Positions 668 to 677 (NEGSSLPSQH) are enriched in polar residues. The segment covering 682–692 (VGEEVYDDVDA) has biased composition (acidic residues). At tyrosine 687 the chain carries Phosphotyrosine. Residues 710–736 (RAKTEEKDPKKLKKQEKEEKDLRKKFK) carry the Nuclear localization signal motif. Over residues 711 to 728 (AKTEEKDPKKLKKQEKEE) the composition is skewed to basic and acidic residues. An SH3 2 domain is found at 736–804 (KYDGEIRVLY…LRSYLVDNDG (69 aa)).

As to quaternary structure, part of a complex consisting of SKAP2, FYB1 and PTPNS1. Part of a complex consisting of SKAP2, FYB1 and PIRB. Part of a complex consisting of SKAP1, FYB1 and CLNK. Interacts with CLNK (via its SH2 domain); this interaction allows SKAP1 and FYB1 to recruit FYN to the complex, thus promoting the phosphorylation of CLNK by FYN. Interacts with FYN. Interacts with LCP2. Interacts with SKAP1. Interacts with SKAP2. Interacts with FASLG. Interacts with EVL. Interacts with TMEM47. Interacts with LCK. In terms of processing, T-cell receptor ligation leads to increased tyrosine phosphorylation. Expressed in hematopoietic tissues such as myeloid and T-cells, spleen and thymus. Not expressed in B-cells, nor in non-lymphoid tissues. FYB-130 is preferentially expressed in mature T-cells compared to FYB-120, whereas thymocytes showed a greater relative amount of FYB-120. Expressed in podocytes.

It is found in the cytoplasm. Its subcellular location is the nucleus. The protein localises to the cell junction. Functionally, acts as an adapter protein of the FYN and LCP2 signaling cascades in T-cells. May play a role in linking T-cell signaling to remodeling of the actin cytoskeleton. Modulates the expression of IL2. Involved in platelet activation. Prevents the degradation of SKAP1 and SKAP2. May be involved in high affinity immunoglobulin epsilon receptor signaling in mast cells. This Mus musculus (Mouse) protein is FYN-binding protein 1 (Fyb1).